The following is a 297-amino-acid chain: Nitrogenase iron protein 2 (297 aa).

G14 to S21 is an ATP binding site. C102 serves as a coordination point for [4Fe-4S] cluster. R105 is subject to ADP-ribosylarginine; by dinitrogenase reductase ADP-ribosyltransferase. Residue C136 coordinates [4Fe-4S] cluster.

The protein belongs to the NifH/BchL/ChlL family. Homodimer. It depends on [4Fe-4S] cluster as a cofactor. The reversible ADP-ribosylation of Arg-105 inactivates the nitrogenase reductase and regulates nitrogenase activity.

It catalyses the reaction N2 + 8 reduced [2Fe-2S]-[ferredoxin] + 16 ATP + 16 H2O = H2 + 8 oxidized [2Fe-2S]-[ferredoxin] + 2 NH4(+) + 16 ADP + 16 phosphate + 6 H(+). In terms of biological role, the key enzymatic reactions in nitrogen fixation are catalyzed by the nitrogenase complex, which has 2 components: the iron protein and the molybdenum-iron protein. The protein is Nitrogenase iron protein 2 (nifH2) of Nostoc sp. (strain PCC 7120 / SAG 25.82 / UTEX 2576).